Consider the following 186-residue polypeptide: Elongation factor P (186 aa).

The protein belongs to the elongation factor P family.

It localises to the cytoplasm. The protein operates within protein biosynthesis; polypeptide chain elongation. Functionally, involved in peptide bond synthesis. Stimulates efficient translation and peptide-bond synthesis on native or reconstituted 70S ribosomes in vitro. Probably functions indirectly by altering the affinity of the ribosome for aminoacyl-tRNA, thus increasing their reactivity as acceptors for peptidyl transferase. The protein is Elongation factor P of Shewanella baltica (strain OS223).